We begin with the raw amino-acid sequence, 74 residues long: Cecropin-P3 (74 aa).

Positions 1–13 (MFLIYLLVQTAES) are cleaved as a signal peptide. Positions 45-74 (RRRSVGEEDAIPSHIEVNKFFLRKPAKEHI) are cleaved as a propeptide — removed in mature form.

This sequence belongs to the cecropin family. Expressed in the body wall, intestine, uterus and ovary.

Its subcellular location is the secreted. Has antibacterial activity against several Gram-positive and Gram-negative bacteria. Is weakly active against yeasts. Acts by a nonpore mechanism. This is Cecropin-P3 (ASCEC-3) from Ascaris suum (Pig roundworm).